The chain runs to 504 residues: Ribonuclease Y (504 aa).

The helical transmembrane segment at 2-22 threads the bilayer; that stretch reads TTSIVIGVVLVTVGLTFGWTI. A KH domain is found at 194 to 279; it reads TVSTVNLPSE…EIVQKVTQEV (86 aa). The region spanning 320 to 413 is the HD domain; that stretch reads VLYHSKEVAL…VQVADAISAA (94 aa).

The protein belongs to the RNase Y family.

Its subcellular location is the cell membrane. Its function is as follows. Endoribonuclease that initiates mRNA decay. The polypeptide is Ribonuclease Y (Treponema pallidum (strain Nichols)).